Reading from the N-terminus, the 105-residue chain is Large ribosomal subunit protein eL36 (105 aa).

This sequence belongs to the eukaryotic ribosomal protein eL36 family. As to quaternary structure, component of the large ribosomal subunit.

Its subcellular location is the cytoplasm. The protein resides in the cytosol. In terms of biological role, component of the large ribosomal subunit. The ribosome is a large ribonucleoprotein complex responsible for the synthesis of proteins in the cell. The sequence is that of Large ribosomal subunit protein eL36 (rpl36) from Danio rerio (Zebrafish).